Consider the following 968-residue polypeptide: RNA polymerase-associated protein RapA (968 aa).

Residues 164–334 (DVGRRHAPRV…FARLRLLDPN (171 aa)) form the Helicase ATP-binding domain. 177–184 (DEVGLGKT) is a binding site for ATP. The DEAH box motif lies at 280–283 (DEAH). The 173-residue stretch at 490–662 (RVEWLMGYLT…YLAAPENTEG (173 aa)) folds into the Helicase C-terminal domain.

The protein belongs to the SNF2/RAD54 helicase family. RapA subfamily. As to quaternary structure, interacts with the RNAP. Has a higher affinity for the core RNAP than for the holoenzyme. Its ATPase activity is stimulated by binding to RNAP.

Its function is as follows. Transcription regulator that activates transcription by stimulating RNA polymerase (RNAP) recycling in case of stress conditions such as supercoiled DNA or high salt concentrations. Probably acts by releasing the RNAP, when it is trapped or immobilized on tightly supercoiled DNA. Does not activate transcription on linear DNA. Probably not involved in DNA repair. This is RNA polymerase-associated protein RapA from Cronobacter sakazakii (strain ATCC BAA-894) (Enterobacter sakazakii).